We begin with the raw amino-acid sequence, 130 residues long: Large ribosomal subunit protein bL31c (130 aa).

The transit peptide at 1-36 (MVLTLSNQFLAKIPATPKTLTLPKTSSSTLRPQWSC) directs the protein to the chloroplast.

Belongs to the bacterial ribosomal protein bL31 family. Type A subfamily. As to quaternary structure, component of the chloroplast large ribosomal subunit (LSU). Mature 70S chloroplast ribosomes of higher plants consist of a small (30S) and a large (50S) subunit. The 30S small subunit contains 1 molecule of ribosomal RNA (16S rRNA) and 24 different proteins. The 50S large subunit contains 3 rRNA molecules (23S, 5S and 4.5S rRNA) and 33 different proteins.

The protein resides in the plastid. The protein localises to the chloroplast. Component of the chloroplast ribosome (chloro-ribosome), a dedicated translation machinery responsible for the synthesis of chloroplast genome-encoded proteins, including proteins of the transcription and translation machinery and components of the photosynthetic apparatus. This Spinacia oleracea (Spinach) protein is Large ribosomal subunit protein bL31c (RPL31).